Consider the following 374-residue polypeptide: 5-hydroxytryptamine receptor 1D (374 aa).

Residues 1-35 are Extracellular-facing; it reads MSPPNQSLEGLPQEASNRSLNVTGAWDPEVLQALR. Residues asparagine 5, asparagine 17, and asparagine 21 are each glycosylated (N-linked (GlcNAc...) asparagine). A helical transmembrane segment spans residues 36 to 61; that stretch reads ISLVVVLSVITLATVLSNAFVLTTIL. Residues 62–72 are Cytoplasmic-facing; it reads LTKKLHTPANY. Residues 73–94 traverse the membrane as a helical segment; it reads LIGSLATTDLLVSILVMPISIA. The Extracellular segment spans residues 95–106; it reads YTTTRTWNFGQI. A helical membrane pass occupies residues 107-131; the sequence is LCDIWVSSDITCCTASILHLCVIAL. Cysteine 108 and cysteine 185 are disulfide-bonded. Serotonin-binding residues include aspartate 115 and cysteine 119. The DRY motif; important for ligand-induced conformation changes motif lies at 132–134; it reads DRY. The Cytoplasmic segment spans residues 132-151; that stretch reads DRYWAITDALEYSKRRTAGH. A helical membrane pass occupies residues 152 to 173; sequence AAAMIAAVWIISICISIPPLFW. The Extracellular segment spans residues 174 to 191; it reads RQATAHEEMSDCLVNTSQ. Residues 192–215 form a helical membrane-spanning segment; sequence ISYTIYSTCGAFYIPSILLIILYG. Topologically, residues 216-297 are cytoplasmic; sequence RIYVAARSRI…ISAARERKAT (82 aa). A helical membrane pass occupies residues 298–323; that stretch reads KTLGIILGAFIICWLPFFVVSLVLPI. Serine 318 is a binding site for serotonin. Topologically, residues 324-332 are extracellular; sequence CRDSCWIHP. A helical transmembrane segment spans residues 333–356; sequence ALFDFFTWLGYLNSLINPVIYTVF. Positions 349 to 353 match the NPxxY motif; important for ligand-induced conformation changes and signaling motif; that stretch reads NPVIY. At 357-374 the chain is on the cytoplasmic side; sequence NEDFRQAFQKVVHFRKIS.

It belongs to the G-protein coupled receptor 1 family. In terms of assembly, homodimer. Heterodimer with HTR1B. Detected in the motor column in spinal cord, and in several cranial motor nuclei, including nucleus ambiguous, oculomotoris, trochelaris and abducens. Detected in gamma motor neurons in the lumbar spinal cord. Detected in proprioceptive sensory neurons in dorsal root ganglia.

The protein resides in the cell membrane. In terms of biological role, G-protein coupled receptor for 5-hydroxytryptamine (serotonin). Also functions as a receptor for ergot alkaloid derivatives, various anxiolytic and antidepressant drugs and other psychoactive substances. Ligand binding causes a conformation change that triggers signaling via guanine nucleotide-binding proteins (G proteins) and modulates the activity of downstream effectors, such as adenylate cyclase. HTR1D is coupled to G(i)/G(o) G alpha proteins and mediates inhibitory neurotransmission by inhibiting adenylate cyclase activity. Regulates the release of 5-hydroxytryptamine in the brain, and thereby affects neural activity. May also play a role in regulating the release of other neurotransmitters. May play a role in vasoconstriction. The sequence is that of 5-hydroxytryptamine receptor 1D (Htr1d) from Mus musculus (Mouse).